A 442-amino-acid chain; its full sequence is Armadillo-like helical domain containing protein 1 (442 aa).

The sequence is that of Armadillo-like helical domain containing protein 1 from Bos taurus (Bovine).